Reading from the N-terminus, the 368-residue chain is MSDLEQLQSQILADIASASDEAALEAVRVATLGKKGSISALLSTLGKMSPDERKSEGAKINLAKDTVTQALAARREVLKALALDARLASETIDVTLPLRESPAEAGRIHPLSQVWDEVTTIFADMGFAVAEGPDIETDDYNFTRLNFPEGHPAREMHDTFYFNPKEAAGSEAGEKPSRLLLRTHTSPVQVRTMLSQKPPIRVICPGRTYRSDSDQTHTPMFHQVEGLVIDKSSHLGHLKWILHEFCKAFFEVDNVNMRFRPSFFPFTEPSLEVDIQCRRDKNEIRFGEGEDWLEILGCGMVHPNVLKLCGLDPEVYQGFAWGMGIDRIAMLKYGIADLRQLFEGDVRWLNHYGFRPLEVPTLAGGLSS.

E268 serves as a coordination point for Mg(2+).

This sequence belongs to the class-II aminoacyl-tRNA synthetase family. Phe-tRNA synthetase alpha subunit type 1 subfamily. In terms of assembly, tetramer of two alpha and two beta subunits. Mg(2+) is required as a cofactor.

It is found in the cytoplasm. The enzyme catalyses tRNA(Phe) + L-phenylalanine + ATP = L-phenylalanyl-tRNA(Phe) + AMP + diphosphate + H(+). This is Phenylalanine--tRNA ligase alpha subunit from Nitrobacter hamburgensis (strain DSM 10229 / NCIMB 13809 / X14).